The sequence spans 360 residues: Photosystem II protein D1 (360 aa).

A run of 3 helical transmembrane segments spans residues 29-46, 118-133, and 142-156; these read YIGWFGVIMIPTLLTATT, HFLLGVFCYLGRQWEL, and WICVAYSAPVSAATA. H118 lines the chlorophyll a pocket. Y126 provides a ligand contact to pheophytin a. 2 residues coordinate [CaMn4O5] cluster: D170 and E189. The helical transmembrane segment at 197 to 218 threads the bilayer; it reads FHMLGVAGVFGGSLFSAMHGSL. Residue H198 coordinates chlorophyll a. Residues H215 and 264 to 265 each bind a quinone; that span reads SF. H215 contacts Fe cation. H272 is a binding site for Fe cation. The helical transmembrane segment at 274–288 threads the bilayer; sequence FLGAWPVIGIWFTAM. [CaMn4O5] cluster is bound by residues H332, E333, D342, and A344. Residues 345–360 constitute a propeptide that is removed on maturation; it reads SGEQAPVALIAPAING.

Belongs to the reaction center PufL/M/PsbA/D family. In terms of assembly, PSII is composed of 1 copy each of membrane proteins PsbA, PsbB, PsbC, PsbD, PsbE, PsbF, PsbH, PsbI, PsbJ, PsbK, PsbL, PsbM, PsbT, PsbX, PsbY, PsbZ, Psb30/Ycf12, peripheral proteins PsbO, CyanoQ (PsbQ), PsbU, PsbV and a large number of cofactors. It forms dimeric complexes. It depends on The D1/D2 heterodimer binds P680, chlorophylls that are the primary electron donor of PSII, and subsequent electron acceptors. It shares a non-heme iron and each subunit binds pheophytin, quinone, additional chlorophylls, carotenoids and lipids. D1 provides most of the ligands for the Mn4-Ca-O5 cluster of the oxygen-evolving complex (OEC). There is also a Cl(-1) ion associated with D1 and D2, which is required for oxygen evolution. The PSII complex binds additional chlorophylls, carotenoids and specific lipids. as a cofactor. Post-translationally, tyr-161 forms a radical intermediate that is referred to as redox-active TyrZ, YZ or Y-Z. In terms of processing, C-terminally processed by CtpA; processing is essential to allow assembly of the oxygen-evolving complex and thus photosynthetic growth.

Its subcellular location is the cellular thylakoid membrane. The enzyme catalyses 2 a plastoquinone + 4 hnu + 2 H2O = 2 a plastoquinol + O2. Its function is as follows. Photosystem II (PSII) is a light-driven water:plastoquinone oxidoreductase that uses light energy to abstract electrons from H(2)O, generating O(2) and a proton gradient subsequently used for ATP formation. It consists of a core antenna complex that captures photons, and an electron transfer chain that converts photonic excitation into a charge separation. The D1/D2 (PsbA/PsbD) reaction center heterodimer binds P680, the primary electron donor of PSII as well as several subsequent electron acceptors. In Microcystis aeruginosa (strain NIES-843 / IAM M-2473), this protein is Photosystem II protein D1.